Consider the following 346-residue polypeptide: Golgi-associated RAB2 interactor protein 2 (346 aa).

Positions 275–346 (TPVESEANTS…EKHVRQPKDF (72 aa)) are disordered. 2 stretches are compositionally biased toward basic and acidic residues: residues 283-297 (TSKE…EKTP) and 334-346 (KLVE…PKDF).

This sequence belongs to the GARIN family. As to quaternary structure, interacts with CALM1.

The protein resides in the cell projection. Its subcellular location is the cilium. It is found in the flagellum. In terms of biological role, seems to play a role in sperm motility. In Macaca fascicularis (Crab-eating macaque), this protein is Golgi-associated RAB2 interactor protein 2 (GARIN2).